Here is a 332-residue protein sequence, read N- to C-terminus: Glyceraldehyde-3-phosphate dehydrogenase (332 aa).

Residues 11 to 12, aspartate 34, arginine 78, and serine 120 each bind NAD(+); that span reads RI. D-glyceraldehyde 3-phosphate contacts are provided by residues 151-153, threonine 182, arginine 197, 210-211, and arginine 233; these read SCT and TG. Cysteine 152 (nucleophile) is an active-site residue. Residue asparagine 314 coordinates NAD(+).

It belongs to the glyceraldehyde-3-phosphate dehydrogenase family. Homotetramer.

The protein localises to the cytoplasm. The catalysed reaction is D-glyceraldehyde 3-phosphate + phosphate + NAD(+) = (2R)-3-phospho-glyceroyl phosphate + NADH + H(+). It participates in carbohydrate degradation; glycolysis; pyruvate from D-glyceraldehyde 3-phosphate: step 1/5. Catalyzes the oxidative phosphorylation of glyceraldehyde 3-phosphate (G3P) to 1,3-bisphosphoglycerate (BPG) using the cofactor NAD. The first reaction step involves the formation of a hemiacetal intermediate between G3P and a cysteine residue, and this hemiacetal intermediate is then oxidized to a thioester, with concomitant reduction of NAD to NADH. The reduced NADH is then exchanged with the second NAD, and the thioester is attacked by a nucleophilic inorganic phosphate to produce BPG. The sequence is that of Glyceraldehyde-3-phosphate dehydrogenase (gap) from Kitasatospora aureofaciens (Streptomyces aureofaciens).